The sequence spans 175 residues: Bifunctional protein PyrR (175 aa).

The short motif at 97-109 (IVLIDDVLFTGRT) is the PRPP-binding element.

It belongs to the purine/pyrimidine phosphoribosyltransferase family. PyrR subfamily. As to quaternary structure, homodimer and homohexamer; in equilibrium.

It catalyses the reaction UMP + diphosphate = 5-phospho-alpha-D-ribose 1-diphosphate + uracil. In terms of biological role, regulates transcriptional attenuation of the pyrimidine nucleotide (pyr) operon by binding in a uridine-dependent manner to specific sites on pyr mRNA. This disrupts an antiterminator hairpin in the RNA and favors formation of a downstream transcription terminator, leading to a reduced expression of downstream genes. Functionally, also displays a weak uracil phosphoribosyltransferase activity which is not physiologically significant. The protein is Bifunctional protein PyrR of Leuconostoc mesenteroides subsp. mesenteroides (strain ATCC 8293 / DSM 20343 / BCRC 11652 / CCM 1803 / JCM 6124 / NCDO 523 / NBRC 100496 / NCIMB 8023 / NCTC 12954 / NRRL B-1118 / 37Y).